Reading from the N-terminus, the 134-residue chain is Mini-ribonuclease 3 (134 aa).

Asp22 is a catalytic residue.

It belongs to the MrnC RNase family. Homodimer. Mg(2+) serves as cofactor.

The protein resides in the cytoplasm. Its function is as follows. Involved in correct processing of both the 5' and 3' ends of 23S rRNA precursor. Processes 30S rRNA precursor transcript even in absence of ribonuclease 3 (Rnc); Rnc processes 30S rRNA into smaller rRNA precursors. The sequence is that of Mini-ribonuclease 3 from Staphylococcus aureus (strain NCTC 8325 / PS 47).